Consider the following 1563-residue polypeptide: DNA-directed RNA polymerase subunit beta' (1563 aa).

Positions 61, 63, 76, and 79 each coordinate Zn(2+). Mg(2+) contacts are provided by D588, D590, and D592. C925, C999, C1006, and C1009 together coordinate Zn(2+).

The protein belongs to the RNA polymerase beta' chain family. The RNAP catalytic core consists of 2 alpha, 1 beta, 1 beta' and 1 omega subunit. When a sigma factor is associated with the core the holoenzyme is formed, which can initiate transcription. Mg(2+) serves as cofactor. The cofactor is Zn(2+).

The catalysed reaction is RNA(n) + a ribonucleoside 5'-triphosphate = RNA(n+1) + diphosphate. Its function is as follows. DNA-dependent RNA polymerase catalyzes the transcription of DNA into RNA using the four ribonucleoside triphosphates as substrates. The chain is DNA-directed RNA polymerase subunit beta' from Hydrogenobaculum sp. (strain Y04AAS1).